Here is a 298-residue protein sequence, read N- to C-terminus: MAPKVVDRRNTMPQLQAKSLEMRTPQATKTAVLVIGGAEDKVHGREILRTFFGRAGASKAYITIIPSASREPAIIGGRYIRIFEEMGAEKVEILDIREREQCESSQVRASLEACSGVFLTGGDQLRLCGVLSDTPVMEIIRQRVRGGQLTLAGTSAGAAVMGHHMIAGGGSGETPNRSLVDMATGLGLIPEVIVDQHFHNRNRMGRLISAVAAHPDRLGIGIDEDTCAVFERDGWLQVLGKGSVTIVDPTELTHTNEPHVGANEPLTVHNLRLHILSYGDRFHLYQRTVLPAVHRISS.

Active-site charge relay system residues include Ser-155, Glu-173, and His-197.

Belongs to the peptidase S51 family.

The catalysed reaction is [L-4-(L-arginin-2-N-yl)aspartate](n) + H2O = [L-4-(L-arginin-2-N-yl)aspartate](n-1) + L-4-(L-arginin-2-N-yl)aspartate. In terms of biological role, exopeptidase that catalyzes the hydrolytic cleavage of multi-L-arginyl-poly-L-aspartic acid (cyanophycin; a water-insoluble reserve polymer) into aspartate-arginine dipeptides. This is Cyanophycinase (cphB) from Trichormus variabilis (strain ATCC 29413 / PCC 7937) (Anabaena variabilis).